The sequence spans 350 residues: Phosphotriesterase-related protein (350 aa).

A divalent metal cation is bound by residues His24, His26, Glu170, His202, His231, and Asp299.

Belongs to the metallo-dependent hydrolases superfamily. Phosphotriesterase family. It depends on a divalent metal cation as a cofactor.

The sequence is that of Phosphotriesterase-related protein from Nematostella vectensis (Starlet sea anemone).